The primary structure comprises 814 residues: DNA topoisomerase 1 (814 aa).

The span at 1 to 12 shows a compositional bias: low complexity; that stretch reads MSSSDSDSVSLS. Residues 1 to 180 are disordered; sequence MSSSDSDSVS…PNDEEDEDED (180 aa). Residues 13 to 22 are compositionally biased toward basic residues; it reads IRRRQRRGSS. A phosphoserine mark is found at S52, S54, and S136. Position 138 is a phosphothreonine (T138). Interaction with DNA regions lie at residues 404 to 405, 467 to 472, and 559 to 561; these read KY, RAGNEK, and SAK. The Topo IB-type catalytic domain occupies 411–814; it reads GSSLKGQSDL…AADTPPDWKW (404 aa). Y773 acts as the O-(3'-phospho-DNA)-tyrosine intermediate in catalysis.

This sequence belongs to the type IB topoisomerase family. Monomer.

It carries out the reaction ATP-independent breakage of single-stranded DNA, followed by passage and rejoining.. In terms of biological role, releases the supercoiling and torsional tension of DNA introduced during the DNA replication and transcription by transiently cleaving and rejoining one strand of the DNA duplex. Introduces a single-strand break via transesterification at a target site in duplex DNA. The scissile phosphodiester is attacked by the catalytic tyrosine of the enzyme, resulting in the formation of a DNA-(3'-phosphotyrosyl)-enzyme intermediate and the expulsion of a 5'-OH DNA strand. TThe free DNA strand then rotates around the intact phosphodiester bond on the opposing strand, thus removing DNA supercoils. Finally, in the religation step, the DNA 5'-OH attacks the covalent intermediate to expel the active-site tyrosine and restore the DNA phosphodiester backbone. In Schizosaccharomyces pombe (strain 972 / ATCC 24843) (Fission yeast), this protein is DNA topoisomerase 1 (top1).